The sequence spans 407 residues: Argininosuccinate synthase (407 aa).

ATP-binding positions include 16 to 24 and A44; that span reads AYSGGLDTS. Residues Y96 and S101 each contribute to the L-citrulline site. G126 contributes to the ATP binding site. Residues T128, N132, and D133 each contribute to the L-aspartate site. N132 serves as a coordination point for L-citrulline. L-citrulline is bound by residues R136, S185, S194, E270, and Y282.

It belongs to the argininosuccinate synthase family. Type 1 subfamily. As to quaternary structure, homotetramer.

It is found in the cytoplasm. It carries out the reaction L-citrulline + L-aspartate + ATP = 2-(N(omega)-L-arginino)succinate + AMP + diphosphate + H(+). It participates in amino-acid biosynthesis; L-arginine biosynthesis; L-arginine from L-ornithine and carbamoyl phosphate: step 2/3. The polypeptide is Argininosuccinate synthase (Shewanella frigidimarina (strain NCIMB 400)).